A 119-amino-acid polypeptide reads, in one-letter code: Ribonuclease P protein component (119 aa).

This sequence belongs to the RnpA family. In terms of assembly, consists of a catalytic RNA component (M1 or rnpB) and a protein subunit.

It catalyses the reaction Endonucleolytic cleavage of RNA, removing 5'-extranucleotides from tRNA precursor.. Its function is as follows. RNaseP catalyzes the removal of the 5'-leader sequence from pre-tRNA to produce the mature 5'-terminus. It can also cleave other RNA substrates such as 4.5S RNA. The protein component plays an auxiliary but essential role in vivo by binding to the 5'-leader sequence and broadening the substrate specificity of the ribozyme. The sequence is that of Ribonuclease P protein component from Streptococcus pyogenes serotype M5 (strain Manfredo).